The sequence spans 245 residues: MQSPEKITPYDTECPKNEQVEAMFNHIAGHYDRLNHLFSWGMDRVWRQKAIRMIEPFAPHTVLDVATGTGDLAIEICRHIPSVKQVTGVDLSLEMMRIGEQKVRSENLDNRITFMQKDCLDLPFADHSFDAVTVAFGLRNFQNIKLGLEEMYRVLNEGAPLMILELSRPVSFPWKQGYNFYASHVIPVVGRFLSQDAEAYTYLPESIAAMPQREELADLMLSVGFREAYYRSLSLEVATVYMGLK.

Residues threonine 69, aspartate 90, and 118–119 contribute to the S-adenosyl-L-methionine site; that span reads DC.

Belongs to the class I-like SAM-binding methyltransferase superfamily. MenG/UbiE family.

The enzyme catalyses a 2-demethylmenaquinol + S-adenosyl-L-methionine = a menaquinol + S-adenosyl-L-homocysteine + H(+). It functions in the pathway quinol/quinone metabolism; menaquinone biosynthesis; menaquinol from 1,4-dihydroxy-2-naphthoate: step 2/2. Functionally, methyltransferase required for the conversion of demethylmenaquinol (DMKH2) to menaquinol (MKH2). This Porphyromonas gingivalis (strain ATCC 33277 / DSM 20709 / CIP 103683 / JCM 12257 / NCTC 11834 / 2561) protein is Demethylmenaquinone methyltransferase.